A 439-amino-acid polypeptide reads, in one-letter code: Phosphoribosylamine--glycine ligase (439 aa).

The 209-residue stretch at 109–317 (REFMERNKIP…LVEISERIID (209 aa)) folds into the ATP-grasp domain. 136-195 (IDEFGKPVVVKPLGLTGGKGVKVVGYQLKDNEEAKEYAEYLIRKDGKVLIEERTDGVEFT) contacts ATP. The Mg(2+) site is built by glutamine 275, glutamate 287, and asparagine 289. Residues glutamine 275, glutamate 287, and asparagine 289 each coordinate Mn(2+).

The protein belongs to the GARS family. It depends on Mg(2+) as a cofactor. Mn(2+) serves as cofactor.

It carries out the reaction 5-phospho-beta-D-ribosylamine + glycine + ATP = N(1)-(5-phospho-beta-D-ribosyl)glycinamide + ADP + phosphate + H(+). It functions in the pathway purine metabolism; IMP biosynthesis via de novo pathway; N(1)-(5-phospho-D-ribosyl)glycinamide from 5-phospho-alpha-D-ribose 1-diphosphate: step 2/2. The polypeptide is Phosphoribosylamine--glycine ligase (Pyrococcus furiosus (strain ATCC 43587 / DSM 3638 / JCM 8422 / Vc1)).